The sequence spans 503 residues: Glutamate--tRNA ligase 1 (503 aa).

The short motif at proline 17–asparagine 27 is the 'HIGH' region element. A 'KMSKS' region motif is present at residues lysine 261 to arginine 265. An ATP-binding site is contributed by lysine 264.

The protein belongs to the class-I aminoacyl-tRNA synthetase family. Glutamate--tRNA ligase type 1 subfamily. In terms of assembly, monomer.

The protein resides in the cytoplasm. It carries out the reaction tRNA(Glu) + L-glutamate + ATP = L-glutamyl-tRNA(Glu) + AMP + diphosphate. Catalyzes the attachment of glutamate to tRNA(Glu) in a two-step reaction: glutamate is first activated by ATP to form Glu-AMP and then transferred to the acceptor end of tRNA(Glu). This Levilactobacillus brevis (strain ATCC 367 / BCRC 12310 / CIP 105137 / JCM 1170 / LMG 11437 / NCIMB 947 / NCTC 947) (Lactobacillus brevis) protein is Glutamate--tRNA ligase 1.